The chain runs to 373 residues: 3 beta-hydroxysteroid dehydrogenase/Delta 5--&gt;4-isomerase type 3 (373 aa).

Residue tyrosine 155 is the Proton acceptor of the active site. Lysine 159 serves as a coordination point for NAD(+). The helical transmembrane segment at 288–308 (VPILYWLAFLLETVSFLLSPI) threads the bilayer.

This sequence belongs to the 3-beta-HSD family. Liver and kidney. Greater expression in liver.

The protein resides in the endoplasmic reticulum membrane. It is found in the mitochondrion membrane. It carries out the reaction a 3beta-hydroxy-Delta(5)-steroid + NAD(+) = a 3-oxo-Delta(5)-steroid + NADH + H(+). The enzyme catalyses a 3-oxo-Delta(5)-steroid = a 3-oxo-Delta(4)-steroid. The protein operates within lipid metabolism; steroid biosynthesis. Its function is as follows. 3-beta-HSD is a bifunctional enzyme, that catalyzes the oxidative conversion of Delta(5)-ene-3-beta-hydroxy steroid, and the oxidative conversion of ketosteroids. The 3-beta-HSD enzymatic system plays a crucial role in the biosynthesis of all classes of hormonal steroids. In Mus musculus (Mouse), this protein is 3 beta-hydroxysteroid dehydrogenase/Delta 5--&gt;4-isomerase type 3 (Hsd3b3).